Consider the following 421-residue polypeptide: Caspase-12 (421 aa).

In terms of domain architecture, CARD spans 1-92; sequence MADKKPSKED…QLSLEYQHES (92 aa). S85 bears the Phosphoserine mark. The tract at residues 88-131 is disordered; the sequence is YQHESEDQESEESSASSSSSTESEEENEESKDEERAASAHSMAV. The segment covering 109 to 118 has biased composition (acidic residues); sequence ESEEENEESK. Catalysis depends on residues H252 and C300.

This sequence belongs to the peptidase C14A family. As to quaternary structure, heterotetramer that consists of two anti-parallel arranged heterodimers, each one formed by two subunits (Potential). May interact with TRAF2.

Involved in the activation cascade of caspases responsible for apoptosis execution. The protein is Caspase-12 of Macaca mulatta (Rhesus macaque).